Here is a 372-residue protein sequence, read N- to C-terminus: Dof zinc finger protein DOF5.6 (372 aa).

The Dof-type zinc finger occupies 73 to 127 (QKCPRCESTHTKFCYYNNYSLSQPRYFCKTCRRYWTKGGTLRNIPVGGGCRKNKK). Cysteine 75, cysteine 78, cysteine 100, and cysteine 103 together coordinate Zn(2+). The interval 117 to 146 (PVGGGCRKNKKPSSSNSSSSTSSGKKPSNI) is disordered. Over residues 128–145 (PSSSNSSSSTSSGKKPSN) the composition is skewed to low complexity.

In terms of tissue distribution, the PEAR proteins (e.g. DOF2.4, DOF5.1, DOF3.2, DOF1.1, DOF5.6 and DOF5.3) form a short-range concentration gradient that peaks at protophloem sieve elements (PSE). Preferentially expressed in the vasculature of all organs, including seedlings, roots, stems, buds, leaves, flowers and siliques, and particularly in the cambium, phloem and interfascicular parenchyma cells of inflorescence stems.

The protein resides in the nucleus. Functionally, transcription factor that binds specifically to a 5'-AA[AG]G-3' consensus core sequence. Promotes expression. The PEAR proteins (e.g. DOF2.4, DOF5.1, DOF3.2, DOF1.1, DOF5.6 and DOF5.3) activate gene expression that promotes radial growth of protophloem sieve elements. Involved in the regulation of interfascicular cambium formation and vascular tissue development, particularly at a very early stage during inflorescence stem development; promotes both cambium activity and phloem specification, but prevents xylem specification. The chain is Dof zinc finger protein DOF5.6 from Arabidopsis thaliana (Mouse-ear cress).